Reading from the N-terminus, the 703-residue chain is DnaJ homolog subfamily C member 14 (703 aa).

The span at 1 to 11 (MAQKHPGERRL) shows a compositional bias: basic and acidic residues. Positions 1 to 229 (MAQKHPGERR…GRHRLARKRS (229 aa)) are disordered. Residues 17–28 (SGGTSLSTSGSS) show a composition bias toward low complexity. Residues 75–84 (HGPPRGPGPP) show a composition bias toward pro residues. The segment covering 91–102 (DESETGSEESGV) has biased composition (acidic residues). The segment covering 121–133 (SFLSIPSACNCQG) has biased composition (polar residues). A compositionally biased stretch (acidic residues) spans 163-176 (GEDEELEEEYDDEE). A compositionally biased stretch (basic residues) spans 193-202 (PLSRRQKHRF). A compositionally biased stretch (basic and acidic residues) spans 203–218 (LIKEDVRDSGRREPKA). Residues 219–228 (PGRHRLARKR) show a composition bias toward basic residues. The next 2 helical transmembrane spans lie at 305-325 (MMFQ…IRIL) and 327-347 (VVGA…QLGW). The region spanning 444–508 (NPFHVLGVEA…ERRKEYEMKR (65 aa)) is the J domain. Disordered regions lie at residues 622–643 (FGSR…PPAD) and 659–703 (MSNG…PFQR). A compositionally biased stretch (polar residues) spans 673 to 684 (GTTSTSRPNSSV). A compositionally biased stretch (basic residues) spans 691 to 703 (PKRRKKVRRPFQR).

In terms of assembly, interacts with the FxxxFxxxF motif of DRD1 via its C-terminal domain.

The protein localises to the endoplasmic reticulum membrane. Its function is as follows. Regulates the export of target proteins, such as DRD1, from the endoplasmic reticulum to the cell surface. The chain is DnaJ homolog subfamily C member 14 (Dnajc14) from Mus musculus (Mouse).